We begin with the raw amino-acid sequence, 152 residues long: Adenosine 5'-monophosphoramidase HNT1 (152 aa).

The region spanning 8–119 is the HIT domain; it reads IFCKIIKGEI…IPKKDEATGL (112 aa). AMP-binding positions include 33–34, N93, 99–101, and 106–108; these read DI, HQV, and HFH. The Histidine triad motif motif lies at 104-108; the sequence is HVHFH. H106 (tele-AMP-histidine intermediate) is an active-site residue.

It belongs to the HINT family. In terms of assembly, homodimer. Mg(2+) serves as cofactor.

It carries out the reaction adenosine 5'-phosphoramidate + H2O = AMP + NH4(+). Functionally, hydrolyzes adenosine 5'-monophosphoramidate substrates such as AMP-morpholidate, AMP-N-alanine methyl ester, AMP-alpha-acetyl lysine methyl ester and AMP-NH2. This is Adenosine 5'-monophosphoramidase HNT1 from Candida albicans (strain SC5314 / ATCC MYA-2876) (Yeast).